A 727-amino-acid polypeptide reads, in one-letter code: MAFQKAVKGTILVGGGALATVLGLSHFAHYKRKQVNLAFVEAADCISEPVNREPPSREAQILTLKNTSEFDVLVIGGGATGSGCALDAVTRGLKTALVERDDFSSGTSSRSTKLIHGGVRYLQKAIMKLDIEQYRMVKEALHERANLLEIAPHLSAPLPIMLPIYKWWQLPYYWVGIKLYDLVAGSNCLKSSYVLSKSRALEHFPMLQKDKLVGAIVYYDGQHNDARMNLAIALTAARYGAATANYMEVMSLLKKTDPQTGKERVSGARCKDVLTGEEFDVRAKCVINATGPFTDTVRKMDDKDTTAICQPSAGVHIVMPGYYSPESMGLLDPATSDGRVIFFLPWQKMTIAGTTDTPTDVTHHPIPSEEDINFILNEVRNYLSCDVEVRRGDVLAAWSGIRPLVTDPKSADTKSISRNHVVDISESGLITIAGGKWTTYRSMAEDTINAAVKAHNLKAGPSRTVGLFLQGGKDWSPTLYIRLVQDYGLESEVAQHLAATYGDKAFEVAKMASVTGKRWPIVGVRLVSEFPYIEAEVKYGIKEYACTAVDMISRRTRLAFLNVQAAEEALPRIVELMGRELNWDDSKKEEELETARKFLYYEMGYKSRSEQLTDRSEISLLPSDIDRYKKRFHKFDADQKGFITIVDVQRVLESIGVQMDENTLHEILNEVDLNKNGQVELNEFLQLMSAIQKGRVSGSRLAILMKTAEENLDRRVPIPVDRSCGGL.

Residues 1–42 (MAFQKAVKGTILVGGGALATVLGLSHFAHYKRKQVNLAFVEA) constitute a mitochondrion transit peptide. 71–99 (DVLVIGGGATGSGCALDAVTRGLKTALVE) is a binding site for FAD. Position 601 is a phosphotyrosine (tyrosine 601). EF-hand domains are found at residues 623-658 (SDIDRYKKRFHKFDADQKGFITIVDVQRVLESIGVQ) and 659-694 (MDENTLHEILNEVDLNKNGQVELNEFLQLMSAIQKG). Ca(2+) contacts are provided by aspartate 672, asparagine 674, asparagine 676, glutamine 678, and glutamate 683.

This sequence belongs to the FAD-dependent glycerol-3-phosphate dehydrogenase family. Requires FAD as cofactor.

The protein resides in the mitochondrion. It carries out the reaction a quinone + sn-glycerol 3-phosphate = dihydroxyacetone phosphate + a quinol. It functions in the pathway polyol metabolism; glycerol degradation via glycerol kinase pathway; glycerone phosphate from sn-glycerol 3-phosphate (aerobic route): step 1/1. Calcium-binding enhance the activity of the enzyme. In terms of biological role, calcium-responsive mitochondrial glycerol-3-phosphate dehydrogenase which seems to be a key component of the pancreatic beta-cell glucose-sensing device. The protein is Glycerol-3-phosphate dehydrogenase, mitochondrial (GPD2) of Bos taurus (Bovine).